We begin with the raw amino-acid sequence, 124 residues long: Large ribosomal subunit protein bL21 (124 aa).

This sequence belongs to the bacterial ribosomal protein bL21 family. In terms of assembly, part of the 50S ribosomal subunit. Contacts protein L20.

This protein binds to 23S rRNA in the presence of protein L20. The sequence is that of Large ribosomal subunit protein bL21 from Synechocystis sp. (strain ATCC 27184 / PCC 6803 / Kazusa).